The chain runs to 390 residues: Caveolae-associated protein 1 (390 aa).

Position 1 is an N-acetylmethionine (methionine 1). The interval 1–40 is disordered; it reads MEDPTLYIVERPLPGYPDAEAPEPSSAGAQAAEEPSGAGS. Residues 1 to 98 are required for homotrimerization and for interaction with CAVIN2 and CAVIN3; that stretch reads MEDPTLYIVE…IQGELSKLGK (98 aa). Positions 22–40 are enriched in low complexity; it reads PEPSSAGAQAAEEPSGAGS. 3 positions are modified to phosphoserine: serine 36, serine 40, and serine 46. The tract at residues 52–62 is nuclear export signal; that stretch reads VLVLSLLDKII. Residues 53 to 75 form a leucine-zipper 1 region; sequence LVLSLLDKIIGAVDQIQLTQAQL. Lysine 116 is covalently cross-linked (Glycyl lysine isopeptide (Lys-Gly) (interchain with G-Cter in SUMO2)). Serine 118 is subject to Phosphoserine. Lysine 122 is covalently cross-linked (Glycyl lysine isopeptide (Lys-Gly) (interchain with G-Cter in SUMO2)). The nuclear localization signal stretch occupies residues 136 to 152; it reads KKLEVNEAELLRRRNFK. The residue at position 156 (tyrosine 156) is a Phosphotyrosine. Lysine 161 is covalently cross-linked (Glycyl lysine isopeptide (Lys-Gly) (interchain with G-Cter in SUMO1); alternate). Lysine 161 participates in a covalent cross-link: Glycyl lysine isopeptide (Lys-Gly) (interchain with G-Cter in SUMO2); alternate. Residue lysine 165 forms a Glycyl lysine isopeptide (Lys-Gly) (interchain with G-Cter in SUMO2) linkage. A leucine-zipper 2 region spans residues 166–186; sequence LSISKSLKESEALPEKEGEEL. 2 positions are modified to phosphoserine: serine 167 and serine 169. Lysine 170 participates in a covalent cross-link: Glycyl lysine isopeptide (Lys-Gly) (interchain with G-Cter in SUMO2). Residues serine 171 and serine 175 each carry the phosphoserine modification. Basic and acidic residues predominate over residues 172 to 181; sequence LKESEALPEK. The interval 172–201 is disordered; sequence LKESEALPEKEGEELGEGERPEEDAAALEL. A compositionally biased stretch (acidic residues) spans 182-201; the sequence is EGEELGEGERPEEDAAALEL. Residues 199-282 adopt a coiled-coil conformation; it reads LELSSDEAVE…RMNKLGTRLV (84 aa). Phosphoserine is present on residues serine 202 and serine 203. A nuclear localization signal region spans residues 233 to 249; that stretch reads KKAFSKEKMEKTKVRTR. Positions 257–297 are leucine-zipper 3; it reads LKTKENLEKTRHTLEKRMNKLGTRLVPAERREKLKTSRDKL. Serine 300 is subject to Phosphoserine. Phosphothreonine is present on threonine 302. Tyrosine 308 is modified (phosphotyrosine). A Glycyl lysine isopeptide (Lys-Gly) (interchain with G-Cter in SUMO2) cross-link involves residue lysine 326. Positions 344-366 are disordered; sequence VGADDDEGGAERGEAGDLRRGSS. A compositionally biased stretch (basic and acidic residues) spans 352 to 365; sequence GAERGEAGDLRRGS. Phosphoserine occurs at positions 365, 366, 379, 387, and 389.

Belongs to the CAVIN family. Component of the CAVIN complex composed of CAVIN1, CAVIN2, CAVIN3 and CAVIN4. Homotrimer. Interacts with TTF1. Interacts with RNA polymerase I subunit POLR1A/RPA1. Binds the 3' end of pre-rRNA. Interacts with transcription factor ZNF148. Interacts with LIPE in the adipocyte cytoplasm. Interacts with CAV1 and CAVIN3. Interacts with CAVIN2. Interacts with CAVIN4 and CAV3. Phosphorylated. Present in active and inactive forms. Changes in phosphorylation pattern may alter activity. Phosphorylation at Tyr-156 is essential for its functionin the regulation of ribosomal transcriptional activity. In terms of processing, five truncated forms are found in the caveolae. These are thought to be the result of proteolysis and may be phosphorylation-dependent. Post-translationally, monoubiquitinated.

Its subcellular location is the membrane. It is found in the caveola. It localises to the cell membrane. The protein localises to the microsome. The protein resides in the endoplasmic reticulum. Its subcellular location is the cytoplasm. It is found in the cytosol. It localises to the mitochondrion. The protein localises to the nucleus. In terms of biological role, plays an important role in caveolae formation and organization. Essential for the formation of caveolae in all tissues. Core component of the CAVIN complex which is essential for recruitment of the complex to the caveolae in presence of calveolin-1 (CAV1). Essential for normal oligomerization of CAV1. Promotes ribosomal transcriptional activity in response to metabolic challenges in the adipocytes and plays an important role in the formation of the ribosomal transcriptional loop. Dissociates transcription complexes paused by DNA-bound TTF1, thereby releasing both RNA polymerase I and pre-RNA from the template. The caveolae biogenesis pathway is required for the secretion of proteins such as GASK1A. In Homo sapiens (Human), this protein is Caveolae-associated protein 1.